The sequence spans 705 residues: Protein arginine N-methyltransferase 7 (705 aa).

SAM-dependent MTase PRMT-type domains follow at residues 29-372 (QNSW…YSLW) and 381-705 (TKSV…QKKL).

The protein belongs to the class I-like SAM-binding methyltransferase superfamily. Protein arginine N-methyltransferase family. PRMT7 subfamily.

In terms of biological role, essential arginine methyltransferase that can both catalyze the formation of omega-N monomethylarginine (MMA) and symmetrical dimethylarginine (sDMA). Specifically mediates the symmetrical dimethylation of arginine residues in the small nuclear ribonucleoproteins SmD1 and SmD3. In Drosophila simulans (Fruit fly), this protein is Protein arginine N-methyltransferase 7 (Art7).